The sequence spans 372 residues: Cytochrome b (372 aa).

Helical transmembrane passes span 25-45 (FGSM…FLAI), 69-90 (WMMQ…YIHI), 105-125 (WLSG…GYVL), and 170-190 (FFAL…IHIM). Heme b is bound by residues H75 and H89. Heme b contacts are provided by H174 and H188. H193 contacts a ubiquinone. 4 consecutive transmembrane segments (helical) span residues 218 to 238 (HKDM…MSFM), 280 to 300 (LGGT…PFTH), 312 to 332 (LMQF…WAAT), and 339 to 358 (FTTI…IMNP).

This sequence belongs to the cytochrome b family. In terms of assembly, the cytochrome bc1 complex contains 3 respiratory subunits (MT-CYB, CYC1 and UQCRFS1), 2 core proteins (UQCRC1 and UQCRC2) and probably 6 low-molecular weight proteins. Requires heme b as cofactor.

The protein resides in the mitochondrion inner membrane. In terms of biological role, component of the ubiquinol-cytochrome c reductase complex (complex III or cytochrome b-c1 complex) that is part of the mitochondrial respiratory chain. The b-c1 complex mediates electron transfer from ubiquinol to cytochrome c. Contributes to the generation of a proton gradient across the mitochondrial membrane that is then used for ATP synthesis. This Pantherophis obsoletus (Black ratsnake) protein is Cytochrome b (MT-CYB).